Reading from the N-terminus, the 158-residue chain is 6,7-dimethyl-8-ribityllumazine synthase (158 aa).

5-amino-6-(D-ribitylamino)uracil contacts are provided by residues phenylalanine 18, 50–52, and 74–76; these read SYD and AVI. 79 to 80 contributes to the (2S)-2-hydroxy-3-oxobutyl phosphate binding site; sequence ET. Histidine 82 serves as the catalytic Proton donor. Leucine 107 serves as a coordination point for 5-amino-6-(D-ribitylamino)uracil. Arginine 122 is a (2S)-2-hydroxy-3-oxobutyl phosphate binding site.

It belongs to the DMRL synthase family.

It catalyses the reaction (2S)-2-hydroxy-3-oxobutyl phosphate + 5-amino-6-(D-ribitylamino)uracil = 6,7-dimethyl-8-(1-D-ribityl)lumazine + phosphate + 2 H2O + H(+). Its pathway is cofactor biosynthesis; riboflavin biosynthesis; riboflavin from 2-hydroxy-3-oxobutyl phosphate and 5-amino-6-(D-ribitylamino)uracil: step 1/2. In terms of biological role, catalyzes the formation of 6,7-dimethyl-8-ribityllumazine by condensation of 5-amino-6-(D-ribitylamino)uracil with 3,4-dihydroxy-2-butanone 4-phosphate. This is the penultimate step in the biosynthesis of riboflavin. This Sulfolobus acidocaldarius (strain ATCC 33909 / DSM 639 / JCM 8929 / NBRC 15157 / NCIMB 11770) protein is 6,7-dimethyl-8-ribityllumazine synthase.